The primary structure comprises 397 residues: 1-deoxy-D-xylulose 5-phosphate reductoisomerase (397 aa).

Positions 10, 11, 12, 13, 36, 38, and 128 each coordinate NADPH. A 1-deoxy-D-xylulose 5-phosphate-binding site is contributed by K129. E130 is a binding site for NADPH. Residue D154 coordinates Mn(2+). S155, E156, S180, and H203 together coordinate 1-deoxy-D-xylulose 5-phosphate. E156 provides a ligand contact to Mn(2+). Position 209 (G209) interacts with NADPH. N221, K222, and E225 together coordinate 1-deoxy-D-xylulose 5-phosphate. E225 is a binding site for Mn(2+).

The protein belongs to the DXR family. Requires Mg(2+) as cofactor. It depends on Mn(2+) as a cofactor.

The enzyme catalyses 2-C-methyl-D-erythritol 4-phosphate + NADP(+) = 1-deoxy-D-xylulose 5-phosphate + NADPH + H(+). It participates in isoprenoid biosynthesis; isopentenyl diphosphate biosynthesis via DXP pathway; isopentenyl diphosphate from 1-deoxy-D-xylulose 5-phosphate: step 1/6. Catalyzes the NADPH-dependent rearrangement and reduction of 1-deoxy-D-xylulose-5-phosphate (DXP) to 2-C-methyl-D-erythritol 4-phosphate (MEP). This is 1-deoxy-D-xylulose 5-phosphate reductoisomerase from Solibacter usitatus (strain Ellin6076).